The sequence spans 239 residues: 2',3'-cyclic-nucleotide 3'-phosphodiesterase (239 aa).

Catalysis depends on proton donor/acceptor residues His39 and His150.

The protein belongs to the 2H phosphoesterase superfamily. CPD1 family.

Its subcellular location is the golgi apparatus. It carries out the reaction ADP-alpha-D-ribose 1'',2''-cyclic phosphate + H2O = ADP-alpha-D-ribose 1''-phosphate + H(+). The catalysed reaction is 2',3'-cyclophospho-AMP + H2O = adenosine 2'-phosphate + H(+). The enzyme catalyses 2',3'-cyclophospho-GMP + H2O = guanosine 2'-phosphate + H(+). It catalyses the reaction 2',3'-cyclophospho-UMP + H2O = uridine 2'-phosphate + H(+). It carries out the reaction 2',3'-cyclophospho-CMP + H2O = cytidine 2'-phosphate + H(+). The catalysed reaction is a nucleoside 2',3'-cyclic phosphate + H2O = a nucleoside 2'-phosphate + H(+). Involved in the metabolism of ADP-ribose 1',2'-cyclic phosphate which is produced as a consequence of tRNA splicing. The protein is 2',3'-cyclic-nucleotide 3'-phosphodiesterase of Saccharomyces cerevisiae (strain ATCC 204508 / S288c) (Baker's yeast).